Here is a 493-residue protein sequence, read N- to C-terminus: Cysteine--tRNA ligase (493 aa).

Cys31 is a Zn(2+) binding site. The short motif at 33 to 43 (PTVYGDAHLGH) is the 'HIGH' region element. Zn(2+) contacts are provided by Cys226, His251, and Glu255. The short motif at 283–287 (KMGKS) is the 'KMSKS' region element. Residue Lys286 coordinates ATP.

This sequence belongs to the class-I aminoacyl-tRNA synthetase family. As to quaternary structure, monomer. It depends on Zn(2+) as a cofactor.

The protein resides in the cytoplasm. The catalysed reaction is tRNA(Cys) + L-cysteine + ATP = L-cysteinyl-tRNA(Cys) + AMP + diphosphate. In Phocaeicola vulgatus (strain ATCC 8482 / DSM 1447 / JCM 5826 / CCUG 4940 / NBRC 14291 / NCTC 11154) (Bacteroides vulgatus), this protein is Cysteine--tRNA ligase.